Here is a 660-residue protein sequence, read N- to C-terminus: MSAIESVMQEHRVFNPPESFVRQAAIPGMDAYRALCAEAERDYEGFWASRARDLLHWNKPFTKVLDESNAPFYKWFEDGELNASYNCLDRNLQNGNADKTAIVFEADDGTATRVSYRDLHAKVCRFANGLKALGIKKGDRVVIYMPMSVEGVVAMQACARLGATHSVVFGGFSAKSLQERLVDVGAVALITADEQMRGGKALPLKAIADDALALGGCEAVKNVIVYRRTGGKVNWVEGRDRWMEDVSAGQPDTCEAVPVSAEHPLFVLYTSGSTGKPKGVQHSTGGYLLWALMTMQWTFDIKPDDLFWCTADIGWVTGHTYIAYGPLAAGATQIIFEGVPTYPNAGRFWDMIARHKVSIFYTAPTAIRSLIKAAEADEKIHPKQYDLSSLRLLGTVGEPINPEAWMWYYKNIGNERCPIVDTFWQTETGGHMITPLPGATPLVPGSCTLPLPGIMAAIVDETGHDVPNGSGGILVVKRPWPAMIRTIWGDPERFKKSYFPEELGGKLYLAGDGSIRDKETGYFTIMGRIDDVLNVSGHRMGTMEIESALVANPIVAEAAVVGRPDDTTGEAICAFVVLKRARPSDAEAQQIATELRNWVAKEIGPIAKPKDIRFGDNLPKTRSGKIMRRLLRSLAKGEEITQDTSTLENPAILDQLKQAQ.

Residues 197 to 200 (RGGK) and Thr-317 contribute to the CoA site. ATP contacts are provided by residues 397–399 (GEP), 421–426 (DTFWQT), Asp-512, and Arg-528. Ser-536 serves as a coordination point for CoA. Position 539 (Arg-539) interacts with ATP. Mg(2+) is bound by residues Val-550 and Val-555. Residue Lys-625 is modified to N6-acetyllysine.

This sequence belongs to the ATP-dependent AMP-binding enzyme family. Requires Mg(2+) as cofactor. Post-translationally, acetylated. Deacetylation by the SIR2-homolog deacetylase activates the enzyme.

The enzyme catalyses acetate + ATP + CoA = acetyl-CoA + AMP + diphosphate. Catalyzes the conversion of acetate into acetyl-CoA (AcCoA), an essential intermediate at the junction of anabolic and catabolic pathways. AcsA undergoes a two-step reaction. In the first half reaction, AcsA combines acetate with ATP to form acetyl-adenylate (AcAMP) intermediate. In the second half reaction, it can then transfer the acetyl group from AcAMP to the sulfhydryl group of CoA, forming the product AcCoA. This is Acetyl-coenzyme A synthetase from Cupriavidus pinatubonensis (strain JMP 134 / LMG 1197) (Cupriavidus necator (strain JMP 134)).